The sequence spans 175 residues: Endoribonuclease YbeY (175 aa).

Positions 129, 133, and 139 each coordinate Zn(2+).

Belongs to the endoribonuclease YbeY family. It depends on Zn(2+) as a cofactor.

Its subcellular location is the cytoplasm. Single strand-specific metallo-endoribonuclease involved in late-stage 70S ribosome quality control and in maturation of the 3' terminus of the 16S rRNA. The protein is Endoribonuclease YbeY of Lactobacillus gasseri (strain ATCC 33323 / DSM 20243 / BCRC 14619 / CIP 102991 / JCM 1131 / KCTC 3163 / NCIMB 11718 / NCTC 13722 / AM63).